A 446-amino-acid polypeptide reads, in one-letter code: MTKYKVGMVSLGCDKNRVDSEIILGKMSNEYEITNNAKEADVIIVNTCGFIESAKQESIDTILEMAEYKNNYKCKLLIATGCLIQRYGDELKNLIPEIDIMLGVNDYNKIDKVIKEFIEGNKEASKLLNYSDENINEGNRILTTQKESAYIRIAEGCNNFCTYCIIPKIRGKFRSRRMENIISEATDLASQGVKELILIAQDTTQYGSDIYGKKNLHVLLKELSKIEGIKWIRVLYCYPEAIYDELIEEIAVNEKVVKYLDIPIQHISDHVLKLMGRKTSKKDITDKIEKLRKSIPNIIIRTTFIVGFPQETQEDFEEILEFLQEYKLDKVGVFKYSREEDTPASKMDGQIDEAIKKEREEKLMLSQEKISNDINKLKVNKKYDILIEEYDGEFYKGRNFEMAPDIDGNVFFESPKNLEIGEFVKVKIIKNMDYDLIGVVEDESCK.

An MTTase N-terminal domain is found at Tyr-4 to Glu-119. [4Fe-4S] cluster is bound by residues Cys-13, Cys-48, Cys-82, Cys-157, Cys-161, and Cys-164. A Radical SAM core domain is found at Thr-143–Asp-373. One can recognise a TRAM domain in the interval Lys-376 to Asp-442.

It belongs to the methylthiotransferase family. RimO subfamily. [4Fe-4S] cluster is required as a cofactor.

The protein resides in the cytoplasm. It catalyses the reaction L-aspartate(89)-[ribosomal protein uS12]-hydrogen + (sulfur carrier)-SH + AH2 + 2 S-adenosyl-L-methionine = 3-methylsulfanyl-L-aspartate(89)-[ribosomal protein uS12]-hydrogen + (sulfur carrier)-H + 5'-deoxyadenosine + L-methionine + A + S-adenosyl-L-homocysteine + 2 H(+). Its function is as follows. Catalyzes the methylthiolation of an aspartic acid residue of ribosomal protein uS12. This Clostridium botulinum (strain Eklund 17B / Type B) protein is Ribosomal protein uS12 methylthiotransferase RimO.